An 88-amino-acid polypeptide reads, in one-letter code: Phosphocarrier protein HPr (88 aa).

Residues 1–88 (MAQKTFTVTA…DTMSKEGLGE (88 aa)) form the HPr domain. The residue at position 12 (S12) is a Phosphoserine. The active-site Pros-phosphohistidine intermediate is the H15. Position 46 is a phosphoserine; by HPrK/P (S46).

It belongs to the HPr family.

Its subcellular location is the cytoplasm. With respect to regulation, phosphorylation on Ser-46 inhibits the phosphoryl transfer from enzyme I to HPr. In terms of biological role, general (non sugar-specific) component of the phosphoenolpyruvate-dependent sugar phosphotransferase system (sugar PTS). This major carbohydrate active-transport system catalyzes the phosphorylation of incoming sugar substrates concomitantly with their translocation across the cell membrane. The phosphoryl group from phosphoenolpyruvate (PEP) is transferred to the phosphoryl carrier protein HPr by enzyme I. Phospho-HPr then transfers it to the PTS EIIA domain. Its function is as follows. P-Ser-HPr interacts with the catabolite control protein A (CcpA), forming a complex that binds to DNA at the catabolite response elements cre, operator sites preceding a large number of catabolite-regulated genes. Thus, P-Ser-HPr is a corepressor in carbon catabolite repression (CCR), a mechanism that allows bacteria to coordinate and optimize the utilization of available carbon sources. P-Ser-HPr also plays a role in inducer exclusion, in which it probably interacts with several non-PTS permeases and inhibits their transport activity. The polypeptide is Phosphocarrier protein HPr (ptsH) (Priestia megaterium (Bacillus megaterium)).